We begin with the raw amino-acid sequence, 158 residues long: Ribonuclease H (158 aa).

The RNase H type-1 domain occupies 1–142 (MRKQVEIFTD…CDELARAAAM (142 aa)). Positions 10, 48, 70, and 134 each coordinate Mg(2+).

This sequence belongs to the RNase H family. As to quaternary structure, monomer. Mg(2+) is required as a cofactor.

It localises to the cytoplasm. The enzyme catalyses Endonucleolytic cleavage to 5'-phosphomonoester.. Its function is as follows. Endonuclease that specifically degrades the RNA of RNA-DNA hybrids. The sequence is that of Ribonuclease H from Cronobacter sakazakii (strain ATCC BAA-894) (Enterobacter sakazakii).